The primary structure comprises 210 residues: Glutathione S-transferase P (210 aa).

The GST N-terminal domain maps to 2–81 (PPYTIVYFPV…HLGRSLGLYG (80 aa)). Tyr-4 carries the post-translational modification Phosphotyrosine; by EGFR. Glutathione contacts are provided by residues Tyr-8, Arg-14, Trp-39, Lys-45, 52 to 53 (QL), and 65 to 66 (QS). The region spanning 83–204 (DQKEAALVDM…SSPDHVNRPI (122 aa)) is the GST C-terminal domain. N6-succinyllysine is present on residues Lys-103 and Lys-116. Position 128 is an N6-acetyllysine (Lys-128).

It belongs to the GST superfamily. Pi family. Homodimer. Interacts with CDK5.

It localises to the cytoplasm. It is found in the mitochondrion. The protein resides in the nucleus. The catalysed reaction is RX + glutathione = an S-substituted glutathione + a halide anion + H(+). It catalyses the reaction prostaglandin J2 + glutathione = prostaglandin J2-S-(R)-glutathione. It carries out the reaction prostaglandin J2 + glutathione = prostaglandin J2-S-(S)-glutathione. The enzyme catalyses prostaglandin A2 + glutathione = prostaglandin A2-S-(S)-glutathione. The catalysed reaction is 11(S)-hydroxy-14(S),15(S)-epoxy-(5Z,8Z,12E)-eicosatrienoate + glutathione = (11S,15S)-dihydroxy-14(R)-S-glutathionyl-(5Z,8Z,12E)-eicosatrienoate. In terms of biological role, conjugation of reduced glutathione to a wide number of exogenous and endogenous hydrophobic electrophiles. Involved in the formation of glutathione conjugates of both prostaglandin A2 (PGA2) and prostaglandin J2 (PGJ2). Participates in the formation of novel hepoxilin regioisomers. Negatively regulates CDK5 activity via p25/p35 translocation to prevent neurodegeneration. This Mesocricetus auratus (Golden hamster) protein is Glutathione S-transferase P (GSTP1).